We begin with the raw amino-acid sequence, 367 residues long: Nodulation protein NolF (367 aa).

Belongs to the membrane fusion protein (MFP) (TC 8.A.1) family.

Functionally, involved in the production of Medicago-specific nodulation signal molecule. The protein is Nodulation protein NolF (nolF) of Rhizobium meliloti (strain 1021) (Ensifer meliloti).